The chain runs to 403 residues: Phosphoglycerate kinase (403 aa).

Residues 21–23 (DFN), Arg-36, 59–62 (HLGR), Arg-119, and Arg-154 each bind substrate. ATP contacts are provided by residues Lys-207, Gly-299, Glu-330, and 357–360 (GGDA).

This sequence belongs to the phosphoglycerate kinase family. As to quaternary structure, monomer.

It is found in the cytoplasm. The enzyme catalyses (2R)-3-phosphoglycerate + ATP = (2R)-3-phospho-glyceroyl phosphate + ADP. Its pathway is carbohydrate degradation; glycolysis; pyruvate from D-glyceraldehyde 3-phosphate: step 2/5. In Chlamydia caviae (strain ATCC VR-813 / DSM 19441 / 03DC25 / GPIC) (Chlamydophila caviae), this protein is Phosphoglycerate kinase.